The following is a 444-amino-acid chain: Chitinase-like protein Idgf5 (444 aa).

The signal sequence occupies residues 1-26; sequence MMWIQKNPFLGLLLCSFLAFFQSTYA. Residues 29–444 enclose the GH18 domain; sequence GKLVCFYDAQ…PILRSIKFKL (416 aa). Cysteine 33 and cysteine 60 are joined by a disulfide. N-linked (GlcNAc...) asparagine glycosylation is found at asparagine 289 and asparagine 311. Cysteines 349 and 429 form a disulfide.

It belongs to the glycosyl hydrolase 18 family. IDGF subfamily. In terms of processing, glycosylated.

Its subcellular location is the secreted. In terms of biological role, probably required to stimulate the proliferation, polarization and motility of imaginal disk cells. May act by stabilizing the binding of insulin-like peptides to its receptor through a simultaneous interaction with both molecules to form a multiprotein signaling complex. This Drosophila melanogaster (Fruit fly) protein is Chitinase-like protein Idgf5 (Idgf5).